The primary structure comprises 151 residues: UPF0208 membrane protein YE1335 (151 aa).

2 helical membrane-spanning segments follow: residues 46–66 (FGIR…IALG) and 69–89 (LGPA…GLWW).

Belongs to the UPF0208 family.

Its subcellular location is the cell inner membrane. This Yersinia enterocolitica serotype O:8 / biotype 1B (strain NCTC 13174 / 8081) protein is UPF0208 membrane protein YE1335.